Here is a 293-residue protein sequence, read N- to C-terminus: MNFQSVIAKLHEFWSDRGCLIVQPYDIEKGAGTKSPHTFLRSLGPEPWAVAYVEPCRRPADGRYGENPNRYQYYYQYQVLVKPSPDDIQDIYLDSLRVLGIQPEDHDIRFVEDNWEDAAVGAWGVGWEVWLDGMEVTQFTYFQQCGGLDCRPVSIELTYGLERLTMYLQETDAIAKIDWNGTLTYGDVHLQGEIEQSTYNFEASNPELLFQLFSLYEQEALQLIEKQLVLPGLDYVLKCSHTFNLLDARGVISVTERTRYIGRIRQMARQVAQLYLQQREELGFPLLKTQSVS.

It belongs to the class-II aminoacyl-tRNA synthetase family. In terms of assembly, tetramer of two alpha and two beta subunits.

It is found in the cytoplasm. The enzyme catalyses tRNA(Gly) + glycine + ATP = glycyl-tRNA(Gly) + AMP + diphosphate. The protein is Glycine--tRNA ligase alpha subunit of Acaryochloris marina (strain MBIC 11017).